The sequence spans 946 residues: Zinc finger CCCH-type antiviral protein 1 (946 aa).

Residues 1 to 254 are N-terminal domain; that stretch reads MTDPEVFCFI…DRSKSRDRFH (254 aa). The Nuclear localization signal signature appears at 69-76; the sequence is RARVCRRK. 4 C3H1-type zinc fingers span residues 73 to 86, 87 to 113, 150 to 172, and 173 to 194; these read CRRK…DSLH, LCKL…HDVL, CKSY…ERLH, and ICEH…HNLM. 2 disordered regions span residues 221–283 and 302–354; these read NKHT…KDPL and RAQL…AAGF. Positions 224–254 are binding to EXOSC5; sequence TRRNPPSMRAPHPHRRGGAHRDRSKSRDRFH. Residues 242–257 show a composition bias toward basic and acidic residues; sequence AHRDRSKSRDRFHHNS. Ser257 is modified (phosphoserine). The residue at position 262 (Ser262) is a Phosphoserine; by GSK3-beta. Ser265, Ser269, and Ser273 each carry phosphoserine. Thr277 is subject to Phosphothreonine. Residues 283–290 carry the Nuclear export signal motif; the sequence is LEDVSADV. Phosphoserine is present on residues Ser324 and Ser350. Positions 412 to 413 match the Nuclear localization signal motif; it reads KR. Ser425 carries the post-translational modification Phosphoserine. The interval 461–491 is disordered; that stretch reads NPAWPGTSTHNGPNGFSQIMDETPNVSKSSP. The span at 466-477 shows a compositional bias: polar residues; the sequence is GTSTHNGPNGFS. Position 508 is a phosphotyrosine (Tyr508). The interval 523 to 570 is disordered; it reads GETTTPVQGSNRLPPSPLSSSTSHRVAASGSPGKSSTHASVSPASEPS. The span at 524–533 shows a compositional bias: polar residues; the sequence is ETTTPVQGSN. Ser553 carries the post-translational modification Phosphoserine. Residues 554-567 show a composition bias toward polar residues; the sequence is PGKSSTHASVSPAS. Phosphoserine occurs at positions 583 and 680. Residues 684–771 enclose the WWE domain; sequence FVEKTLNSVF…ASKTQRHVVR (88 aa). The PARP catalytic domain occupies 805 to 946; that stretch reads SPQRNASTVS…SLDSSGLQRK (142 aa).

The protein belongs to the ARTD/PARP family. Homodimer or homooligomer. Homooligomerization is essential for its antiviral activity. Interacts with EXOSC5. Interacts (via N-terminal domain) with DDX17 in an RNA-independent manner. Interacts with EXOSC3, EXOSC7, DCP2 and DCP1A. Interacts with PARN in an RNA-independent manner. Interacts with XRN1 in an RNA-dependent manner. Interacts (via N-terminal domain) with DHX30 (via N-terminus) in an RNA-independent manner. Isoform 2 interacts (via zinc-fingers) with RIGI in an RNA-dependent manner. Post-translationally, phosphorylation at Ser-273 is essential for sequential phosphorylation of Ser-269, Ser-265, Ser-262 and Ser-257 by GSK3-beta. Phosphorylation by GSK3-beta enhances its antiviral activity.

Its subcellular location is the cytoplasm. It localises to the nucleus. Its function is as follows. Antiviral protein which inhibits the replication of viruses by recruiting the cellular RNA degradation machineries to degrade the viral mRNAs. Binds to a ZAP-responsive element (ZRE) present in the target viral mRNA, recruits cellular poly(A)-specific ribonuclease PARN to remove the poly(A) tail, and the 3'-5' exoribonuclease complex exosome to degrade the RNA body from the 3'-end. It also recruits the decapping complex DCP1-DCP2 through RNA helicase p72 (DDX17) to remove the cap structure of the viral mRNA to initiate its degradation from the 5'-end. Its target viruses belong to families which include retroviridae: human immunodeficiency virus type 1 (HIV-1) and moloney and murine leukemia virus (MoMLV), filoviridae: ebola virus (EBOV) and marburg virus (MARV), togaviridae: sindbis virus (SINV) and Ross river virus (RRV). Specifically targets the multiply spliced but not unspliced or singly spliced HIV-1 mRNAs for degradation. Isoform 1 is a more potent viral inhibitor than isoform 2. Isoform 2 acts as a positive regulator of RIG-I signaling resulting in activation of the downstream effector IRF3 leading to the expression of type I IFNs and IFN stimulated genes (ISGs). This Mus musculus (Mouse) protein is Zinc finger CCCH-type antiviral protein 1 (Zc3hav1).